The sequence spans 254 residues: Thiazole synthase (254 aa).

Catalysis depends on K96, which acts as the Schiff-base intermediate with DXP. Residues G157, A183–G184, and N205–T206 each bind 1-deoxy-D-xylulose 5-phosphate.

The protein belongs to the ThiG family. As to quaternary structure, homotetramer. Forms heterodimers with either ThiH or ThiS.

The protein resides in the cytoplasm. The catalysed reaction is [ThiS sulfur-carrier protein]-C-terminal-Gly-aminoethanethioate + 2-iminoacetate + 1-deoxy-D-xylulose 5-phosphate = [ThiS sulfur-carrier protein]-C-terminal Gly-Gly + 2-[(2R,5Z)-2-carboxy-4-methylthiazol-5(2H)-ylidene]ethyl phosphate + 2 H2O + H(+). It functions in the pathway cofactor biosynthesis; thiamine diphosphate biosynthesis. Functionally, catalyzes the rearrangement of 1-deoxy-D-xylulose 5-phosphate (DXP) to produce the thiazole phosphate moiety of thiamine. Sulfur is provided by the thiocarboxylate moiety of the carrier protein ThiS. In vitro, sulfur can be provided by H(2)S. This chain is Thiazole synthase, found in Clostridium kluyveri (strain ATCC 8527 / DSM 555 / NBRC 12016 / NCIMB 10680 / K1).